A 192-amino-acid chain; its full sequence is Visinin (192 aa).

Gly-2 is lipidated: N-myristoyl glycine. EF-hand domains are found at residues 24–59, 61–96, 97–132, and 146–181; these read TEEE…FFPN, EPQG…TSSG, KTHL…IFKM, and NSPQ…KNDA. Residues Asp-74, Asn-76, Asp-78, Thr-80, Glu-85, Asp-110, Asp-112, Asn-114, Glu-116, Glu-121, Asn-164, Lys-166, and Glu-171 each contribute to the Ca(2+) site.

The protein belongs to the recoverin family. In terms of tissue distribution, retinal cell specific protein.

Functionally, seems to be implicated in the pathway from retinal rod guanylate cyclase to rhodopsin. May be involved in the blocking of the phosphorylation of rhodopsin. The protein is Visinin of Gallus gallus (Chicken).